A 234-amino-acid chain; its full sequence is Leucyl/phenylalanyl-tRNA--protein transferase (234 aa).

This sequence belongs to the L/F-transferase family.

The protein localises to the cytoplasm. It catalyses the reaction N-terminal L-lysyl-[protein] + L-leucyl-tRNA(Leu) = N-terminal L-leucyl-L-lysyl-[protein] + tRNA(Leu) + H(+). It carries out the reaction N-terminal L-arginyl-[protein] + L-leucyl-tRNA(Leu) = N-terminal L-leucyl-L-arginyl-[protein] + tRNA(Leu) + H(+). The enzyme catalyses L-phenylalanyl-tRNA(Phe) + an N-terminal L-alpha-aminoacyl-[protein] = an N-terminal L-phenylalanyl-L-alpha-aminoacyl-[protein] + tRNA(Phe). Functionally, functions in the N-end rule pathway of protein degradation where it conjugates Leu, Phe and, less efficiently, Met from aminoacyl-tRNAs to the N-termini of proteins containing an N-terminal arginine or lysine. The chain is Leucyl/phenylalanyl-tRNA--protein transferase from Nitrosomonas eutropha (strain DSM 101675 / C91 / Nm57).